Reading from the N-terminus, the 476-residue chain is Exodeoxyribonuclease 7 large subunit (476 aa).

It belongs to the XseA family. In terms of assembly, heterooligomer composed of large and small subunits.

It is found in the cytoplasm. The enzyme catalyses Exonucleolytic cleavage in either 5'- to 3'- or 3'- to 5'-direction to yield nucleoside 5'-phosphates.. In terms of biological role, bidirectionally degrades single-stranded DNA into large acid-insoluble oligonucleotides, which are then degraded further into small acid-soluble oligonucleotides. The protein is Exodeoxyribonuclease 7 large subunit of Bartonella bacilliformis (strain ATCC 35685 / KC583 / Herrer 020/F12,63).